We begin with the raw amino-acid sequence, 411 residues long: Short chain dehydrogenase ausT (411 aa).

Positions 105, 137, 249, and 253 each coordinate NADP(+). Tyrosine 249 acts as the Proton donor in catalysis. The active-site Proton donor is tyrosine 263.

Belongs to the short-chain dehydrogenases/reductases (SDR) family.

Its pathway is secondary metabolite biosynthesis; terpenoid biosynthesis. In terms of biological role, short chain dehydrogenase; part of the gene cluster that mediates the biosynthesis of calidodehydroaustin, a fungal meroterpenoid. The first step of the pathway is the synthesis of 3,5-dimethylorsellinic acid by the polyketide synthase ausA. 3,5-dimethylorsellinic acid is then prenylated by the polyprenyl transferase ausN. Further epoxidation by the FAD-dependent monooxygenase ausM and cyclization by the probable terpene cyclase ausL lead to the formation of protoaustinoid A. Protoaustinoid A is then oxidized to spiro-lactone preaustinoid A3 by the combined action of the FAD-binding monooxygenases ausB and ausC, and the dioxygenase ausE. Acid-catalyzed keto-rearrangement and ring contraction of the tetraketide portion of preaustinoid A3 by ausJ lead to the formation of preaustinoid A4. The aldo-keto reductase ausK, with the help of ausH, is involved in the next step by transforming preaustinoid A4 into isoaustinone which is in turn hydroxylated by the P450 monooxygenase ausI to form austinolide. The cytochrome P450 monooxygenase ausG modifies austinolide to austinol. Austinol is further acetylated to austin by the O-acetyltransferase ausP, which spontaneously changes to dehydroaustin. The cytochrome P450 monooxygenase ausR then converts dehydroaustin is into 7-dehydrodehydroaustin. The hydroxylation catalyzed by ausR permits the O-acetyltransferase ausQ to add an additional acetyl group to the molecule, leading to the formation of acetoxydehydroaustin. The short chain dehydrogenase ausT catalyzes the reduction of the double bond present between carbon atoms 1 and 2 to convert 7-dehydrodehydroaustin into 1,2-dihydro-7-hydroxydehydroaustin. AusQ catalyzes not only an acetylation reaction but also the addition of the PKS ausV diketide product to 1,2-dihydro-7-hydroxydehydroaustin, forming precalidodehydroaustin. Finally, the iron/alpha-ketoglutarate-dependent dioxygenase converts precalidodehydroaustin into calidodehydroaustin. The sequence is that of Short chain dehydrogenase ausT from Aspergillus calidoustus.